Here is a 332-residue protein sequence, read N- to C-terminus: MSTTKRSVTTRPSTSSRNVPRGIWELARLHTRESWLCWYPSIWGACVAAGVSDTVLEPLAFARFLFGIWASVTATHCAFCTFKSVPFCFFVVPRYSSDYWHLDKHVQRCKVRPLPSGMISTPEALLAFVCWVPFTFAITWATLGPAVTVSFIPVWVLSVIYPFMKRLMPFPQVVLGAIIGGAVFPGWVGVTGDLDHLDQALPLFFATAAWVVYFDVFYATQDLPDDKKAGVKSLAVWMGPNVKILLAGLGILQIAFFAMTALRADLSLIFWILGIGVWAVSVPWHVLSLNLKDRHSGGSVFKANIKLGLYMTGVSLLELVLLRVHHAPMKVY.

8 helical membrane passes run 42 to 62 (IWGA…LAFA), 72 to 92 (VTAT…FFVV), 145 to 165 (PAVT…PFMK), 170 to 190 (FPQV…WVGV), 200 to 220 (ALPL…FYAT), 242 to 262 (VKIL…MTAL), 266 to 286 (LSLI…PWHV), and 300 to 320 (VFKA…LELV).

This sequence belongs to the UbiA prenyltransferase family. Requires Mg(2+) as cofactor.

It localises to the membrane. It functions in the pathway secondary metabolite biosynthesis; terpenoid biosynthesis. Its function is as follows. Polyprenyl transferase; part of the gene cluster that mediates the biosynthesis of yanuthone D, a fungal isoprenoid epoxycyclohexenone that acts as an antibiotic against fungi and bacteria. The first step of the pathway is the synthesis of 6-methylsalicylic acid (6-MSA) by the polyketide synthase yanA. 6-MSA is then converted to m-cresol by the decarboxylase yanB. The cytochrome P450 monooxygenase yanC then catalyzes the oxidation of m-cresol to toluquinol. Epoxidation of toluquinol is then performed by the short chain dehydrogenase yanD, with the help of yanE, and a further prenylation by yanG leads to 7-deacetoxyyanuthone A. The next step is the hydroxylation of C-22 of 7-deacetoxyyanuthone A by the cytochrome P450 monooxygenase yanH to yield 22-deacetylyanuthone A. O-Mevalon transferase yanI then attaches mevalon to the hydroxyl group of 22-deacetylyanuthone A to produce yanuthone E. Finally, the FAD-dependent monooxygenase yanF oxidizes the hydroxyl group at C15 of yanuthone E to form yanuthone D. Furthermore, several branching points in the pathway lead to the production of yanuthones F and G from 7-deacetoxyyanuthone A; yanuthones H and I from 22-deacetylyanuthone A; and yanuthone J from yanuthone E. YanG is also involved in the synthesis of yanuthone X1 which does not have 6-methylsalicylic acid (6-MSA) as precursor. In Aspergillus niger (strain ATCC 1015 / CBS 113.46 / FGSC A1144 / LSHB Ac4 / NCTC 3858a / NRRL 328 / USDA 3528.7), this protein is Polyprenyl transferase yanG.